Here is a 247-residue protein sequence, read N- to C-terminus: MRNVELETVLNNQLNIGAFQDYAPNGLQVEGRRDIQRVVTGVTASQALLDAAVAHQADAILVHHGYFWKNEPVVVRGMKRNRLKTLLTHDINLYGYHLPLDAHPELGNNAQLAKLLEIQVLGEIESLLPYGEFTTPLNAVALRERLEKQLGRSVLHCGDRAPAEVRRIAWCTGGGQGYIQQAAEFGVDAFITGEVSEQTIHIAREMKVNFYAAGHHATERYGIKALGEWLAEQYQLDVTFIDIPNPA.

Positions 63, 64, 101, 215, and 219 each coordinate a divalent metal cation.

Belongs to the GTP cyclohydrolase I type 2/NIF3 family. In terms of assembly, homohexamer.

The chain is GTP cyclohydrolase 1 type 2 homolog from Yersinia pestis.